The chain runs to 428 residues: Protein terminus (428 aa).

A C3H1-type zinc finger spans residues 325–346 (CRRCRTQFSRRSKLHIHQKLRC).

This Drosophila melanogaster (Fruit fly) protein is Protein terminus (term).